A 42-amino-acid polypeptide reads, in one-letter code: YAEGTFISDYSIAMDKIRQQDFVNWLLAQKGKKSDWIHNITQ.

It belongs to the glucagon family.

The protein localises to the secreted. Its function is as follows. Potent stimulator of insulin secretion and relatively poor inhibitor of gastric acid secretion. In Bos taurus (Bovine), this protein is Gastric inhibitory polypeptide (GIP).